Consider the following 334-residue polypeptide: N-acetyl-gamma-glutamyl-phosphate reductase (334 aa).

C154 is an active-site residue.

Belongs to the NAGSA dehydrogenase family. Type 1 subfamily.

The protein resides in the cytoplasm. The enzyme catalyses N-acetyl-L-glutamate 5-semialdehyde + phosphate + NADP(+) = N-acetyl-L-glutamyl 5-phosphate + NADPH + H(+). It functions in the pathway amino-acid biosynthesis; L-arginine biosynthesis; N(2)-acetyl-L-ornithine from L-glutamate: step 3/4. Catalyzes the NADPH-dependent reduction of N-acetyl-5-glutamyl phosphate to yield N-acetyl-L-glutamate 5-semialdehyde. The chain is N-acetyl-gamma-glutamyl-phosphate reductase from Photorhabdus laumondii subsp. laumondii (strain DSM 15139 / CIP 105565 / TT01) (Photorhabdus luminescens subsp. laumondii).